The following is a 429-amino-acid chain: Isocitrate dehydrogenase [NADP] (429 aa).

Thr-108 is an NADP(+) binding site. Residues Ser-117, Asn-119, Arg-123, Arg-133, and Arg-156 each coordinate D-threo-isocitrate. Position 308 (Asp-308) interacts with Mg(2+). NADP(+) contacts are provided by residues 340 to 346 (HGSAPKY), Asn-353, Tyr-393, and Arg-397.

This sequence belongs to the isocitrate and isopropylmalate dehydrogenases family. In terms of assembly, homodimer. It depends on Mg(2+) as a cofactor. The cofactor is Mn(2+).

The enzyme catalyses D-threo-isocitrate + NADP(+) = 2-oxoglutarate + CO2 + NADPH. Catalyzes the oxidative decarboxylation of isocitrate to 2-oxoglutarate and carbon dioxide with the concomitant reduction of NADP(+). This is Isocitrate dehydrogenase [NADP] (icd) from Caldococcus noboribetus.